Reading from the N-terminus, the 96-residue chain is Evasin P1078 (96 aa).

Positions 1–28 (MAFNTITFLQWAVFVAILFNMNLHSASA) are cleaved as a signal peptide. 3 disulfide bridges follow: C48-C67, C52-C69, and C63-C80. N-linked (GlcNAc...) asparagine glycosylation is present at N51. N74 is a glycosylation site (N-linked (GlcNAc...) asparagine).

Its subcellular location is the secreted. Functionally, salivary chemokine-binding protein which binds to host chemokines CXCL1, CXCL2, CXCL3, CXCL5, CXCL6, CXCL11 and CXCL13. This Ixodes ricinus (Common tick) protein is Evasin P1078.